We begin with the raw amino-acid sequence, 119 residues long: Probable non-functional T cell receptor gamma variable 10 (119 aa).

The signal sequence occupies residues 1–19 (MSLLEAFAFSSWALGLGLS). The region spanning 24-119 (FQLSISTEVK…MAVYYCAAWD (96 aa)) is the Ig-like domain. Residues Cys40 and Cys115 are joined by a disulfide bond.

As to quaternary structure, gamma-delta TR is a heterodimer composed of a gamma and delta chain; disulfide-linked. The gamma-delta TR is associated with the transmembrane signaling CD3 coreceptor proteins following the stoichiometry: a single gamma-delta TR heterodimer associates with one CD3D-CD3E heterodimer, one CD3G-CD3E heterodimer and one CD247 homodimer forming a stable octameric structure. Upon activation, gamma-delta TR complex associates with FCER1G to initiate intracellular signaling.

It is found in the cell membrane. In terms of biological role, probable non-functional open reading frame (ORF) of V region of the variable domain of T cell receptor (TR) gamma chain. Non-functional ORF generally cannot participate in the synthesis of a productive T cell receptor (TR) chain due to altered V-(D)-J or switch recombination and/or splicing site (at mRNA level) and/or conserved amino acid change (protein level). Gamma-delta TRs recognize a variety of self and foreign non-peptide antigens frequently expressed at the epithelial boundaries between the host and external environment, including endogenous lipids presented by MH-like protein CD1D and phosphoantigens presented by butyrophilin-like molecule BTN3A1. Upon antigen recognition induces rapid, innate-like immune responses involved in pathogen clearance and tissue repair. Binding of gamma-delta TR complex to antigen triggers phosphorylation of immunoreceptor tyrosine-based activation motifs (ITAMs) in the CD3 chains by the LCK and FYN kinases, allowing the recruitment, phosphorylation, and activation of ZAP70 that facilitates phosphorylation of the scaffolding proteins LCP2 and LAT. This lead to the formation of a supramolecular signalosome that recruits the phospholipase PLCG1, resulting in calcium mobilization and ERK activation, ultimately leading to T cell expansion and differentiation into effector cells. Gamma-delta TRs are produced through somatic rearrangement of a limited repertoire of variable (V), diversity (D), and joining (J) genes. The potential diversity of gamma-delta TRs is conferred by the unique ability to rearrange (D) genes in tandem and to utilize all three reading frames. The combinatorial diversity is considerably increased by the sequence exonuclease trimming and random nucleotide (N) region additions which occur during the V-(D)-J rearrangements. This Homo sapiens (Human) protein is Probable non-functional T cell receptor gamma variable 10.